We begin with the raw amino-acid sequence, 424 residues long: CinA-like protein (424 aa).

The protein belongs to the CinA family.

The chain is CinA-like protein from Shewanella sediminis (strain HAW-EB3).